The following is a 149-amino-acid chain: 3-dehydroquinate dehydratase (149 aa).

The Proton acceptor role is filled by Y26. Residues N75, H81, and D88 each contribute to the substrate site. H101 acts as the Proton donor in catalysis. Substrate contacts are provided by residues 102–103 and R112; that span reads LS.

This sequence belongs to the type-II 3-dehydroquinase family. In terms of assembly, homododecamer.

It catalyses the reaction 3-dehydroquinate = 3-dehydroshikimate + H2O. Its pathway is metabolic intermediate biosynthesis; chorismate biosynthesis; chorismate from D-erythrose 4-phosphate and phosphoenolpyruvate: step 3/7. Functionally, catalyzes a trans-dehydration via an enolate intermediate. This is 3-dehydroquinate dehydratase from Shewanella woodyi (strain ATCC 51908 / MS32).